We begin with the raw amino-acid sequence, 449 residues long: Heterogeneous nuclear ribonucleoprotein H (449 aa).

N-acetylmethionine; in Heterogeneous nuclear ribonucleoprotein H; alternate is present on M1. At M2 the chain carries N-acetylmethionine; in Heterogeneous nuclear ribonucleoprotein H, N-terminally processed. In terms of domain architecture, RRM 1 spans 11-90 (FVVKVRGLPW…RYVEVFKSNN (80 aa)). S23 bears the Phosphoserine mark. Residue K35 forms a Glycyl lysine isopeptide (Lys-Gly) (interchain with G-Cter in SUMO2) linkage. S54 and S63 each carry phosphoserine. Residues K87 and K98 each participate in a glycyl lysine isopeptide (Lys-Gly) (interchain with G-Cter in SUMO2) cross-link. In terms of domain architecture, RRM 2 spans 111–188 (GFVRLRGLPF…RYIEIFKSSR (78 aa)). A Dimethylated arginine; alternate modification is found at R233. At R233 the chain carries Omega-N-methylarginine; alternate. The stretch at 234–249 (GAYGGGYGGYDDYNGY) is one 1-1 repeat. Residues 234-433 (GAYGGGYGGY…YGGQSSMSGY (200 aa)) form a 2 X 16 AA Gly-rich approximate repeats region. The residue at position 246 (Y246) is a Phosphotyrosine. One can recognise an RRM 3 domain in the interval 289-364 (HCVHMRGLPY…RYVELFLNST (76 aa)). The residue at position 310 (S310) is a Phosphoserine. 3 repeat units span residues 354–372 (HRYV…GGAY), 374–392 (HRYV…GGAY), and 418–433 (GGYG…MSGY). Positions 354–392 (HRYVELFLNSTAGASGGAYEHRYVELFLNSTAGASGGAY) are 2 X 19 AA perfect repeats.

As to quaternary structure, part of a ternary complex containing FUBP2, PTBP1, PTBP2 and HNRNPH1. Identified in the spliceosome C complex. Interacts with IGF2BP1. Interacts with CUGBP1; the interaction is RNA-dependent. Interacts with MBNL1; the interaction in RNA-independent. In terms of tissue distribution, expressed ubiquitously.

It is found in the nucleus. It localises to the nucleoplasm. This protein is a component of the heterogeneous nuclear ribonucleoprotein (hnRNP) complexes which provide the substrate for the processing events that pre-mRNAs undergo before becoming functional, translatable mRNAs in the cytoplasm. Mediates pre-mRNA alternative splicing regulation. Inhibits, together with CUGBP1, insulin receptor (IR) pre-mRNA exon 11 inclusion in myoblast. Binds to the IR RNA. Binds poly(RG). The protein is Heterogeneous nuclear ribonucleoprotein H (HNRNPH1) of Homo sapiens (Human).